Reading from the N-terminus, the 2948-residue chain is MSSFDINKLVSCLQSTKIKDRNDGLSSVENLLNSKFKLNPKQFDVLVISMFTLIENEQISYLKNKASSAEFRLSYGSNCLKLLIEKSLDYNQELRNSNKPIKMKYKFYMSIIHSIRNYYFIEDNILEPCALDFTKILSSITSQGFFKEHLNYEDWLHIYNLLIKSSSFILDELTKINMHEKLLVEIFTSLHFLIQADSSISVNYLQLVSSSVPNNYFKLLKILSKTCNFFKKESMLTVLLFKIINKLIITLCTENFKFVNKLIQISIKLMISFHQTQLDSLQVQFLIFMNLSATHSFLNLHNFPKLIGDSSIISDDPFDSRQDISIRSSEDSSKTNQSIDSITDGDNDEVILYNVGILIQNLVSKLYSSNNQVKSEDINFMRKPTDDKNWFKLRSIYLRVSEYDEPDSLQPWLFNAGLSKFINSYFEFKKSLYEHNTINSLNTFNASIVRSDSIHQNKRQKLNILSEALYHSNNILDFCNKLIIDKTDYKVQQTGMQILTFYLEVYSPRVEISPLRNITSNNDVKLSGSSSTKNSSILDMSDSTLLNSTFDFPLTTNDSESQFNVNLIFKNVINAFDTDELNYWSLMATRAIIYDSLQRSIKIEEKYFFQLLKIALQLIKNKEVSRISCSLVYSIISRHSNEGLNKIMEKSLIIQIDNLIDLSEISGPFSICEESFQLWYSINKLVRNINLARNFILAERIQAWLISKWDIAANINIGFWYSNPSSHFEFVNFICWLCGINIEQSNQQNLLDLYCGVLNEANIFMNSYNELEVFFLNNCNVRDNTSSWIEIDIDNLSENKTSDDLLIRIIETGKNYLKEESVSVEAFEWAILEFRIVRLLKDHDIHNQLINSIQYQASDLLECINVMNATSNISDFIKVLSRTNFMLMKGGSIEIISTSFELGNFFDKISGNGLMYNANQRLLQQDQCSNNDNIDMFHDEFTSTNEPKTNFQTESKSTILNCINLGYVDVSCVQALKCLLIRNKIQGDSSVKTFDLIVKFLESLRSPEVLYCLFYLCRLLESGDLERSEIPIVSWTRIIRILGEGPLTNFDLERDELTIIIVSKLLTISFPIWHDNPDDAFKKDCLDMCSWLLQCGTKNLILTEASCIEFLIFMIAYSRYNNQTIIENNEIKSLFIKTFTKSTNNIKIKILPSLVNYLKSISVTDQMAIYKELFLNFDTPQQSIETCGTFCLFFCILSEASIQVTIAVIFNFMEYSRFEYFLPYIKGAFSLIYKRLNLKSTKELFNLFKYEILKSWWSYNFDIKQFPYDLFDYDDISSFLSSNCKELIAVSISNANNSNSGFLEMISSVKETDLASLVFDSLTLAIPLAYTREGIRNDMFKKLSDILKDQYRLQMKEKVTTIIFEVIKFTDMSNEKYIRDLGPKNEVTLQLFKNNSQILETPGSVSISLHSSLDLIRGLVEKYSVNPKSFWQVNVLYFLFRHISIILHNSVNVEQKLLCLRKFKLLIILGHKNIFSLQLANLLITTLSPFLKESDLHEDVANILSIFRIQKLGKYDESEFLPFIVKLVSCLVEVDGTITSINSRLLKTLEEYVTLSNKNRKVHVILQASMNVLKSKPIELTSSDIEFFLNDEAELKLCTMGVSNKHVMKLVSSIFMIVEFYDETRLHENVVKLLLNQKDTQQSKKFKLWSAEYLANYYLNGGLNNKISHIVSLVENDTLLEDTFESDISSMDNILNEILRYIVSDNLEIAACAESILGVLIWKFKTRKSDVQKFLNFDKHENDYASFIVPLDFHSCILLNSNDDELRILGHSIKEIISNLGQSLEGISFETWTSRLFLSITQELAKFTSIAPLFSSFATKVDSFSKTVLPGFICYYLNTTGKEGASQVIKLLSEFAKLRSYESDFIELLMQILLKIRIGAKKSIPIFMEVYSSLNINYFYEIAAKHKYFKTALMLFEDDVSKHEKHIDWSSNSRLLSNIYESIDNEDLIFGLPEETSLEYAINMINRRNETSDQLKFDSGLFDTNISFDLERRNTGILNSMVRNGFLGVSKLVSKSLNNVDTNNASFEWAWKLNCWDIPCPREANEEHQLIYKTLKQIHDYPSFASESCQESLLQTLHIKDAIINCCSSPKELRLNIERWLISLTCISNIRDVLRYKESDFRISLHEFSQRTDWFEQADFDMSENILLARKAALQITGDLSSDCMSLKKESIWLCVLHDLIRYNSIAIIAKESQKSVNSIVMINEISKTKFSESDHLLRDSISQLTKYQIARTLWQQGHTSIPVIMLKESQQNEAINTSISSMNITPSLINANLVDWMSNSRQDLASNIMAKYVLPTADMVTYVKELDQKAKVYEILANFCETQFRSLSLNDHVYKLEKSVDLKKSEIEELKSHYSRMPVAADEKKNAQRYYSKLKAQYIGELSDLNSLKGSICEFSDKAVEFYLKSILTDGDNDENLDKFFALWLEHSNKDDLHVSISDNVLSLPNHKLISWSTQLISRLSSEPSKFQNLLKSLIVGLCYDHPYHSLYGLISLKKHESYANKSSNVLLISKSVAATDIWQQLLTRGDNKINEILLNIEKFCNESIKLAEYKVSKGKSIQLDSLKIGNYWLQVLPHIPPPTINLPVDLSTRYNNVIYFDRVVPKVSIATSGLSLPKIATFYLSNGSEHKVLLKHGTDDLRQDSIMEQVFEKVNNIFRKDKETRKRELKVRTYNAVPLGPETGIIEFVPNSIALIDVIRPYHSKIDTLKADKARDLMKTCQSEDKTERYKTYDKISKKISPVLKYFFFDNYVAPDIWFDTRTSYTRGIATTSMVGHILGLGDRHCNNILLDKTSGEPIHIDLGVAFDQGKRLPIPETVPFRLTRDIVDGFGITGVNGVFDKSCEHTYRVLRQNKDHILAILDVLRWDPLYSWSLSPIRRKKLQNEGDRNEVGNLKPQEDGSEGGRAVLMVSDKLTAGGLSVEAIVRELVQEATSPHNLALIYCGWCPFY.

The FAT domain maps to 1898-2497 (YFYEIAAKHK…LYGLISLKKH (600 aa)). Residues 2602 to 2915 (VPKVSIATSG…VLMVSDKLTA (314 aa)) enclose the PI3K/PI4K catalytic domain. A G-loop region spans residues 2608–2614 (ATSGLSL). A catalytic loop region spans residues 2778–2786 (GLGDRHCNN). Residues 2798-2822 (HIDLGVAFDQGKRLPIPETVPFRLT) form an activation loop region. The FATC domain maps to 2916 to 2948 (GGLSVEAIVRELVQEATSPHNLALIYCGWCPFY).

It belongs to the PI3/PI4-kinase family. ATM subfamily. In terms of assembly, associates with DNA double-strand breaks.

It is found in the nucleus. Its subcellular location is the chromosome. The protein localises to the telomere. The catalysed reaction is L-seryl-[protein] + ATP = O-phospho-L-seryl-[protein] + ADP + H(+). The enzyme catalyses L-threonyl-[protein] + ATP = O-phospho-L-threonyl-[protein] + ADP + H(+). Functionally, serine/threonine protein kinase which activates checkpoint signaling upon genotoxic stresses such as ionizing radiation (IR), ultraviolet light (UV), or DNA replication stalling, thereby acting as a DNA damage sensor. Recognizes the substrate consensus sequence [ST]-Q. Phosphorylates histone H2A to form H2AS128ph (gamma-H2A) at sites of DNA damage, involved in the regulation of DNA damage response mechanism. Required for the control of telomere length and genome stability. The protein is Serine/threonine-protein kinase TEL1 (TEL1) of Debaryomyces hansenii (strain ATCC 36239 / CBS 767 / BCRC 21394 / JCM 1990 / NBRC 0083 / IGC 2968) (Yeast).